The primary structure comprises 359 residues: DNA replication and repair protein RecF (359 aa).

30-37 (GPNGSGKT) is a binding site for ATP.

Belongs to the RecF family.

It localises to the cytoplasm. Functionally, the RecF protein is involved in DNA metabolism; it is required for DNA replication and normal SOS inducibility. RecF binds preferentially to single-stranded, linear DNA. It also seems to bind ATP. The sequence is that of DNA replication and repair protein RecF from Aliivibrio salmonicida (strain LFI1238) (Vibrio salmonicida (strain LFI1238)).